The chain runs to 124 residues: Protein MGF 110-4L (124 aa).

The N-terminal stretch at 1-28 is a signal peptide; sequence MLVIFLGILGLLANQVLGLPTQAGGHLR. The N-linked (GlcNAc...) asparagine; by host glycan is linked to Asn64. The short motif at 121-124 is the Prevents secretion from ER element; sequence KEDL.

This sequence belongs to the asfivirus MGF 110 family.

Its subcellular location is the virion. The protein resides in the host endoplasmic reticulum-Golgi intermediate compartment. Its function is as follows. Causes the redistribution of lumenal ER protein to an enlarged ERGIC compartment. The protein is Protein MGF 110-4L of African swine fever virus (strain Badajoz 1971 Vero-adapted) (Ba71V).